The primary structure comprises 305 residues: Acetyl-coenzyme A carboxylase carboxyl transferase subunit beta (305 aa).

The CoA carboxyltransferase N-terminal domain maps to 23–292 (GWLKCTHCNE…EENEPSPPPK (270 aa)). Zn(2+)-binding residues include Cys27, Cys30, Cys46, and Cys49. The segment at 27 to 49 (CTHCNELIHANELEQNSNCCPKC) adopts a C4-type zinc-finger fold. A disordered region spans residues 281-305 (FSEENEPSPPPKNLIKKTSPLKDKN).

Belongs to the AccD/PCCB family. In terms of assembly, acetyl-CoA carboxylase is a heterohexamer composed of biotin carboxyl carrier protein (AccB), biotin carboxylase (AccC) and two subunits each of ACCase subunit alpha (AccA) and ACCase subunit beta (AccD). Zn(2+) serves as cofactor.

The protein resides in the cytoplasm. The enzyme catalyses N(6)-carboxybiotinyl-L-lysyl-[protein] + acetyl-CoA = N(6)-biotinyl-L-lysyl-[protein] + malonyl-CoA. It participates in lipid metabolism; malonyl-CoA biosynthesis; malonyl-CoA from acetyl-CoA: step 1/1. Its function is as follows. Component of the acetyl coenzyme A carboxylase (ACC) complex. Biotin carboxylase (BC) catalyzes the carboxylation of biotin on its carrier protein (BCCP) and then the CO(2) group is transferred by the transcarboxylase to acetyl-CoA to form malonyl-CoA. The chain is Acetyl-coenzyme A carboxylase carboxyl transferase subunit beta from Protochlamydia amoebophila (strain UWE25).